Reading from the N-terminus, the 377-residue chain is tRNA 2-selenouridine synthase (377 aa).

The Rhodanese domain occupies 18 to 141 (ITRGVTLIDV…LRQEAMDATD (124 aa)). Cys-101 (S-selanylcysteine intermediate) is an active-site residue.

It belongs to the SelU family. In terms of assembly, monomer.

The catalysed reaction is 5-methylaminomethyl-2-thiouridine(34) in tRNA + selenophosphate + (2E)-geranyl diphosphate + H2O + H(+) = 5-methylaminomethyl-2-selenouridine(34) in tRNA + (2E)-thiogeraniol + phosphate + diphosphate. It catalyses the reaction 5-methylaminomethyl-2-thiouridine(34) in tRNA + (2E)-geranyl diphosphate = 5-methylaminomethyl-S-(2E)-geranyl-thiouridine(34) in tRNA + diphosphate. It carries out the reaction 5-methylaminomethyl-S-(2E)-geranyl-thiouridine(34) in tRNA + selenophosphate + H(+) = 5-methylaminomethyl-2-(Se-phospho)selenouridine(34) in tRNA + (2E)-thiogeraniol. The enzyme catalyses 5-methylaminomethyl-2-(Se-phospho)selenouridine(34) in tRNA + H2O = 5-methylaminomethyl-2-selenouridine(34) in tRNA + phosphate. Involved in the post-transcriptional modification of the uridine at the wobble position (U34) of tRNA(Lys), tRNA(Glu) and tRNA(Gln). Catalyzes the conversion of 2-thiouridine (S2U-RNA) to 2-selenouridine (Se2U-RNA). Acts in a two-step process involving geranylation of 2-thiouridine (S2U) to S-geranyl-2-thiouridine (geS2U) and subsequent selenation of the latter derivative to 2-selenouridine (Se2U) in the tRNA chain. The sequence is that of tRNA 2-selenouridine synthase from Cronobacter sakazakii (strain ATCC BAA-894) (Enterobacter sakazakii).